An 88-amino-acid chain; its full sequence is U1-hexatoxin-Iw1d (88 aa).

A signal peptide spans 1 to 17; sequence LKFVVLICLVIMASTSA. Gln-18 is subject to Pyrrolidone carboxylic acid. 5 disulfides stabilise this stretch: Cys-20-Cys-31, Cys-25-Cys-39, Cys-30-Cys-65, Cys-49-Cys-73, and Cys-67-Cys-80. Residues 86–88 constitute a propeptide that is removed on maturation; sequence RSE.

It belongs to the MIT-like AcTx family. In terms of tissue distribution, expressed by the venom gland.

Its subcellular location is the secreted. This is U1-hexatoxin-Iw1d from Illawarra wisharti (Illawarra funnel-web spider).